The primary structure comprises 138 residues: Transcription antitermination protein NusB (138 aa).

It belongs to the NusB family.

Functionally, involved in transcription antitermination. Required for transcription of ribosomal RNA (rRNA) genes. Binds specifically to the boxA antiterminator sequence of the ribosomal RNA (rrn) operons. This is Transcription antitermination protein NusB from Yersinia pseudotuberculosis serotype O:1b (strain IP 31758).